A 539-amino-acid polypeptide reads, in one-letter code: Lipid scramblase CLPTM1L (539 aa).

Residues 1 to 10 lie on the Cytoplasmic side of the membrane; it reads MWSGRSSFTS. Residues 11–31 form a helical membrane-spanning segment; that stretch reads LVVGVFLVYVVHTCWVMYGIV. The Extracellular portion of the chain corresponds to 32-285; the sequence is YTRPCSGDSN…LKGIFVDTNL (254 aa). N-linked (GlcNAc...) asparagine glycosylation is found at asparagine 91 and asparagine 101. A helical membrane pass occupies residues 286-306; that stretch reads YLLALTFFVAAFHLLFDFLAF. Topologically, residues 307–325 are cytoplasmic; that stretch reads KSDISFWKKKKSMIGMSTK. Residues 326–342 traverse the membrane as a helical segment; sequence AVLWRCFSTVVIFLFLL. The Extracellular portion of the chain corresponds to 343-403; sequence DEQTSLLVLI…TEKYDAQAMK (61 aa). The chain crosses the membrane as a helical span at residues 404-424; it reads YLSYLLYPLCVGGAVYSLLNI. Over 425-429 the chain is Cytoplasmic; it reads KYKSW. Residues 430-450 traverse the membrane as a helical segment; that stretch reads YSWLINSFVNGVYAFGFLFML. Over 451–539 the chain is Extracellular; the sequence is PQLFVNYKMK…EQPKRKPHPD (89 aa).

The protein belongs to the CLPTM1 family.

It is found in the endoplasmic reticulum membrane. It carries out the reaction a 6-(alpha-D-glucosaminyl)-1-(1,2-diacyl-sn-glycero-3-phospho)-1D-myo-inositol(in) = a 6-(alpha-D-glucosaminyl)-1-(1,2-diacyl-sn-glycero-3-phospho)-1D-myo-inositol(out). The enzyme catalyses 6-(alpha-D-glucosaminyl)-(1-octadecanoyl,2-(9Z)-octadecenoyl-sn-glycero-3-phospho)-1D-myo-inositol(in) = 6-(alpha-D-glucosaminyl)-(1-octadecanoyl,2-(9Z)-octadecenoyl-sn-glycero-3-phospho)-1D-myo-inositol(out). It catalyses the reaction a 1,2-diacyl-sn-glycero-3-phospho-(1D-myo-inositol)(in) = a 1,2-diacyl-sn-glycero-3-phospho-(1D-myo-inositol)(out). The catalysed reaction is a 1,2-diacyl-sn-glycero-3-phosphocholine(in) = a 1,2-diacyl-sn-glycero-3-phosphocholine(out). It carries out the reaction a 1,2-diacyl-sn-glycero-3-phosphoethanolamine(in) = a 1,2-diacyl-sn-glycero-3-phosphoethanolamine(out). Functionally, scramblase that mediates the translocation of glucosaminylphosphatidylinositol (alpha-D-GlcN-(1-6)-(1,2-diacyl-sn-glycero-3-phospho)-1D-myo-inositol, GlcN-PI) across the endoplasmic reticulum (ER) membrane, from the cytosolic leaflet to the luminal leaflet of the ER membrane, where it participates in the biosynthesis of glycosylphosphatidylinositol (GPI). GPI is a lipid glycoconjugate involved in post-translational modification of proteins. Can also translocate 1,2-diacyl-sn-glycero-3-phospho-(1D-myo-inositol) (phosphatidylinositol or PI), as well as several other phospholipids (1,2-diacyl-sn-glycero-3-phosphocholine, 1,2-diacyl-sn-glycero-3-phosphoethanolamine), and N-acetylglucosaminylphosphatidylinositol (GlcNAc-PI) in vitro. The chain is Lipid scramblase CLPTM1L (Clptm1l) from Mus musculus (Mouse).